A 168-amino-acid polypeptide reads, in one-letter code: Peptide deformylase (168 aa).

The Fe cation site is built by Cys92 and His134. Glu135 is an active-site residue. Residue His138 participates in Fe cation binding.

Belongs to the polypeptide deformylase family. The cofactor is Fe(2+).

It carries out the reaction N-terminal N-formyl-L-methionyl-[peptide] + H2O = N-terminal L-methionyl-[peptide] + formate. Functionally, removes the formyl group from the N-terminal Met of newly synthesized proteins. Requires at least a dipeptide for an efficient rate of reaction. N-terminal L-methionine is a prerequisite for activity but the enzyme has broad specificity at other positions. The chain is Peptide deformylase from Pseudomonas aeruginosa (strain ATCC 15692 / DSM 22644 / CIP 104116 / JCM 14847 / LMG 12228 / 1C / PRS 101 / PAO1).